The chain runs to 123 residues: Ribonuclease P protein component (123 aa).

The protein belongs to the RnpA family. As to quaternary structure, consists of a catalytic RNA component (M1 or rnpB) and a protein subunit.

It catalyses the reaction Endonucleolytic cleavage of RNA, removing 5'-extranucleotides from tRNA precursor.. In terms of biological role, RNaseP catalyzes the removal of the 5'-leader sequence from pre-tRNA to produce the mature 5'-terminus. It can also cleave other RNA substrates such as 4.5S RNA. The protein component plays an auxiliary but essential role in vivo by binding to the 5'-leader sequence and broadening the substrate specificity of the ribozyme. The polypeptide is Ribonuclease P protein component (Streptococcus pneumoniae (strain JJA)).